The following is a 177-amino-acid chain: Large ribosomal subunit protein uL6 (177 aa).

This sequence belongs to the universal ribosomal protein uL6 family. As to quaternary structure, part of the 50S ribosomal subunit.

Functionally, this protein binds to the 23S rRNA, and is important in its secondary structure. It is located near the subunit interface in the base of the L7/L12 stalk, and near the tRNA binding site of the peptidyltransferase center. The protein is Large ribosomal subunit protein uL6 of Actinobacillus pleuropneumoniae serotype 5b (strain L20).